Here is a 555-residue protein sequence, read N- to C-terminus: Protein peste (555 aa).

At 1 to 7 the chain is on the cytoplasmic side; the sequence is MTSRTRH. A helical membrane pass occupies residues 8–28; that stretch reads CARLGIVLLGICCIASGIYLF. Over 29–434 the chain is Extracellular; sequence RNWIDMFTRM…VRVSEEIAAD (406 aa). N-linked (GlcNAc...) asparagine glycans are attached at residues asparagine 70, asparagine 110, asparagine 129, asparagine 213, asparagine 242, asparagine 312, and asparagine 342. Residues 435–455 traverse the membrane as a helical segment; it reads IALVPLIVLLGQIVTGILLAG. Topologically, residues 456–555 are cytoplasmic; sequence GLICTCWYPT…SEDSPDVVVR (100 aa).

It belongs to the CD36 family.

Its subcellular location is the cell membrane. In terms of biological role, (Microbial infection) Plays a role in mycobacterial infection. Mediates infection by M.fortuitum and uptake of M.smegmatis. The polypeptide is Protein peste (Drosophila melanogaster (Fruit fly)).